The sequence spans 33 residues: rho operon leader peptide (33 aa).

Positions 1-25 are enriched in polar residues; it reads MRSEQISGSSLNPSCRFSSAYSPVT. Positions 1-33 are disordered; it reads MRSEQISGSSLNPSCRFSSAYSPVTRQRKDMSR.

The sequence is that of rho operon leader peptide (rhoL) from Escherichia coli O157:H7.